The following is a 465-amino-acid chain: Innexin-11 (465 aa).

Transmembrane regions (helical) follow at residues L29 to G49, Q105 to W125, S195 to A215, and I286 to V306. Residues I433–I465 form a disordered region.

It belongs to the pannexin family.

It localises to the cell membrane. Its subcellular location is the cell junction. The protein resides in the gap junction. In terms of biological role, structural component of the gap junctions. This Caenorhabditis elegans protein is Innexin-11 (inx-11).